A 387-amino-acid chain; its full sequence is MSYFAEKLAELAQVGLNRSLPEIEHQGKWIIAQNRKMLNFSSNDYLGLASDTELQQTFLQNILQEAPLHQWFSSSSSRLLTGNFPIYARLEQLLAQRFQRETALLFNSGYHANIGILPALVDKHSLILADKLVHASLIDGTRLAGCDFYRYQHNNLAHLTQLLEKHTGQYRRIIIVTESVFSMDGDVAPLPQLVALKKAFSSQTEVMLYVDEAHAIGVYGANGLGMAEFFDCIDDIDLLVGTFGKALASMGAYLICDQLIKQYLVNTMRPLIFSTALAPINVAWTHFLFEKLPQFQPKRAHLARLSQQLKQAVELRNGDTLATQSCIVPFVVGENRQAVEKSQYLQQQGYYCLPIRPPTVPKGTARIRFSLTADLTEAELNGLIACL.

109–110 is a binding site for pyridoxal 5'-phosphate; it reads GY. His134 is a substrate binding site. 3 residues coordinate pyridoxal 5'-phosphate: Ser182, His214, and Thr242. Lys245 carries the N6-(pyridoxal phosphate)lysine modification. Thr359 lines the substrate pocket.

The protein belongs to the class-II pyridoxal-phosphate-dependent aminotransferase family. BioF subfamily. In terms of assembly, homodimer. Pyridoxal 5'-phosphate is required as a cofactor.

The enzyme catalyses 6-carboxyhexanoyl-[ACP] + L-alanine + H(+) = (8S)-8-amino-7-oxononanoate + holo-[ACP] + CO2. Its pathway is cofactor biosynthesis; biotin biosynthesis. Catalyzes the decarboxylative condensation of pimeloyl-[acyl-carrier protein] and L-alanine to produce 8-amino-7-oxononanoate (AON), [acyl-carrier protein], and carbon dioxide. This is 8-amino-7-oxononanoate synthase from Haemophilus ducreyi (strain 35000HP / ATCC 700724).